The primary structure comprises 86 residues: Protein YwqI (86 aa).

A coiled-coil region spans residues 57-83; it reads DYKKAVQKNIEDTKDNVDSLKEQDEAI.

This chain is Protein YwqI (ywqI), found in Bacillus subtilis (strain 168).